The primary structure comprises 139 residues: Orientotoxin-2 (139 aa).

Expressed by the venom gland.

The protein localises to the secreted. It catalyses the reaction a 1,2-diacyl-sn-glycero-3-phosphocholine + H2O = a 1-acyl-sn-glycero-3-phosphocholine + a fatty acid + H(+). Its function is as follows. Has a highly toxic phospholipase A2 activity. The protein is Orientotoxin-2 of Vespa orientalis (Oriental hornet).